Here is a 311-residue protein sequence, read N- to C-terminus: Methionyl-tRNA formyltransferase (311 aa).

A (6S)-5,6,7,8-tetrahydrofolate-binding site is contributed by 112–115; that stretch reads SLLP.

Belongs to the Fmt family.

The catalysed reaction is L-methionyl-tRNA(fMet) + (6R)-10-formyltetrahydrofolate = N-formyl-L-methionyl-tRNA(fMet) + (6S)-5,6,7,8-tetrahydrofolate + H(+). Its function is as follows. Attaches a formyl group to the free amino group of methionyl-tRNA(fMet). The formyl group appears to play a dual role in the initiator identity of N-formylmethionyl-tRNA by promoting its recognition by IF2 and preventing the misappropriation of this tRNA by the elongation apparatus. The chain is Methionyl-tRNA formyltransferase from Chelativorans sp. (strain BNC1).